Consider the following 130-residue polypeptide: Large ribosomal subunit protein eL22 (130 aa).

The segment at 1–21 (MPGKTAQKGGRPSGKGKKKKQ) is disordered. The Nuclear localization signal motif lies at 17 to 20 (KKKK).

The protein belongs to the eukaryotic ribosomal protein eL22 family.

This Tripneustes gratilla (Hawaian sea urchin) protein is Large ribosomal subunit protein eL22 (RPL22).